A 297-amino-acid polypeptide reads, in one-letter code: PDZ domain-containing protein GIPC3 (297 aa).

The 81-residue stretch at 97–177 (EVEVTKTEDA…SQPFTLRLVQ (81 aa)) folds into the PDZ domain.

The protein belongs to the GIPC family. As to expression, expressed in adult lung, brain and testis. In the inner ear, it is expressed in the inner and outer hair cells of the organ of Corti. Also expressed in cochlear spiral ganglion neurons.

Functionally, required for postnatal maturation of the hair bundle and long-term survival of hair cells and spiral ganglion. This Mus musculus (Mouse) protein is PDZ domain-containing protein GIPC3 (Gipc3).